Here is a 266-residue protein sequence, read N- to C-terminus: Putative pyruvate, phosphate dikinase regulatory protein (266 aa).

An ADP-binding site is contributed by 149–156; it reads GVSRTSKT.

The protein belongs to the pyruvate, phosphate/water dikinase regulatory protein family. PDRP subfamily.

The catalysed reaction is N(tele)-phospho-L-histidyl/L-threonyl-[pyruvate, phosphate dikinase] + ADP = N(tele)-phospho-L-histidyl/O-phospho-L-threonyl-[pyruvate, phosphate dikinase] + AMP + H(+). It carries out the reaction N(tele)-phospho-L-histidyl/O-phospho-L-threonyl-[pyruvate, phosphate dikinase] + phosphate + H(+) = N(tele)-phospho-L-histidyl/L-threonyl-[pyruvate, phosphate dikinase] + diphosphate. Functionally, bifunctional serine/threonine kinase and phosphorylase involved in the regulation of the pyruvate, phosphate dikinase (PPDK) by catalyzing its phosphorylation/dephosphorylation. The chain is Putative pyruvate, phosphate dikinase regulatory protein from Geobacillus kaustophilus (strain HTA426).